Here is a 567-residue protein sequence, read N- to C-terminus: Urease subunit alpha (567 aa).

One can recognise a Urease domain in the interval glycine 129–phenylalanine 567. Residues histidine 134, histidine 136, and lysine 217 each coordinate Ni(2+). An N6-carboxylysine modification is found at lysine 217. Residue histidine 219 coordinates substrate. Ni(2+) contacts are provided by histidine 246 and histidine 272. The Proton donor role is filled by histidine 320. Aspartate 360 serves as a coordination point for Ni(2+).

The protein belongs to the metallo-dependent hydrolases superfamily. Urease alpha subunit family. As to quaternary structure, heterotrimer of UreA (gamma), UreB (beta) and UreC (alpha) subunits. Three heterotrimers associate to form the active enzyme. Ni cation is required as a cofactor. In terms of processing, carboxylation allows a single lysine to coordinate two nickel ions.

The protein resides in the cytoplasm. It carries out the reaction urea + 2 H2O + H(+) = hydrogencarbonate + 2 NH4(+). The protein operates within nitrogen metabolism; urea degradation; CO(2) and NH(3) from urea (urease route): step 1/1. This chain is Urease subunit alpha, found in Teredinibacter turnerae (strain ATCC 39867 / T7901).